The following is a 910-amino-acid chain: Periodic tryptophan protein 2 homolog (910 aa).

WD repeat units lie at residues 12–50 (GTVY…SKTL), 53–92 (DCNY…KIYT), 94–134 (RSNK…KVYN), 144–183 (LSSD…NLFI), 188–227 (SHKG…GELV), 271–310 (GKSV…LVHN), 313–355 (VSEM…YVMK), 358–397 (AHSL…CTVT), 400–439 (EHTS…NFRT), 443–485 (PEPT…DILS), 486–523 (GHES…AETV), 525–563 (VSHE…NLGS), 586–625 (AKTK…ILKK), and 688–728 (RPEV…DPFQ). Positions 867-910 (SKKSVKKEEEEEEDVSDESDDEDIEDESAGSDDEDSDDSVEIIE) are disordered. A compositionally biased stretch (acidic residues) spans 875-910 (EEEEEDVSDESDDEDIEDESAGSDDEDSDDSVEIIE).

It belongs to the WD repeat PWP2 family.

The chain is Periodic tryptophan protein 2 homolog from Caenorhabditis elegans.